We begin with the raw amino-acid sequence, 464 residues long: Ribosomal protein uS12 methylthiotransferase RimO (464 aa).

One can recognise an MTTase N-terminal domain in the interval 14 to 125; sequence PTVAFAHLGC…IVEVLQRVEA (112 aa). 6 residues coordinate [4Fe-4S] cluster: cysteine 23, cysteine 59, cysteine 88, cysteine 163, cysteine 167, and cysteine 170. The Radical SAM core domain occupies 149–378; that stretch reads TTDQAVAFLK…MALQQPISAE (230 aa). The TRAM domain maps to 381-452; the sequence is HSWVSRTVDV…VYDLSGRIVG (72 aa).

The protein belongs to the methylthiotransferase family. RimO subfamily. [4Fe-4S] cluster is required as a cofactor.

The protein resides in the cytoplasm. It carries out the reaction L-aspartate(89)-[ribosomal protein uS12]-hydrogen + (sulfur carrier)-SH + AH2 + 2 S-adenosyl-L-methionine = 3-methylsulfanyl-L-aspartate(89)-[ribosomal protein uS12]-hydrogen + (sulfur carrier)-H + 5'-deoxyadenosine + L-methionine + A + S-adenosyl-L-homocysteine + 2 H(+). In terms of biological role, catalyzes the methylthiolation of an aspartic acid residue of ribosomal protein uS12. In Parasynechococcus marenigrum (strain WH8102), this protein is Ribosomal protein uS12 methylthiotransferase RimO.